The chain runs to 335 residues: Lipoyl synthase (335 aa).

Positions 55, 60, 66, 81, 85, 88, and 292 each coordinate [4Fe-4S] cluster. The 215-residue stretch at 67-281 folds into the Radical SAM core domain; the sequence is WEDREATFLI…SQRAEEIGFQ (215 aa).

Belongs to the radical SAM superfamily. Lipoyl synthase family. Requires [4Fe-4S] cluster as cofactor.

The protein localises to the cytoplasm. It carries out the reaction [[Fe-S] cluster scaffold protein carrying a second [4Fe-4S](2+) cluster] + N(6)-octanoyl-L-lysyl-[protein] + 2 oxidized [2Fe-2S]-[ferredoxin] + 2 S-adenosyl-L-methionine + 4 H(+) = [[Fe-S] cluster scaffold protein] + N(6)-[(R)-dihydrolipoyl]-L-lysyl-[protein] + 4 Fe(3+) + 2 hydrogen sulfide + 2 5'-deoxyadenosine + 2 L-methionine + 2 reduced [2Fe-2S]-[ferredoxin]. It participates in protein modification; protein lipoylation via endogenous pathway; protein N(6)-(lipoyl)lysine from octanoyl-[acyl-carrier-protein]: step 2/2. Catalyzes the radical-mediated insertion of two sulfur atoms into the C-6 and C-8 positions of the octanoyl moiety bound to the lipoyl domains of lipoate-dependent enzymes, thereby converting the octanoylated domains into lipoylated derivatives. The chain is Lipoyl synthase from Micrococcus luteus (strain ATCC 4698 / DSM 20030 / JCM 1464 / CCM 169 / CCUG 5858 / IAM 1056 / NBRC 3333 / NCIMB 9278 / NCTC 2665 / VKM Ac-2230) (Micrococcus lysodeikticus).